Here is a 134-residue protein sequence, read N- to C-terminus: Ribulose bisphosphate carboxylase small subunit (134 aa).

This sequence belongs to the RuBisCO small chain family. As to quaternary structure, heterohexadecamer of 8 large and 8 small subunits.

In terms of biological role, ruBisCO catalyzes two reactions: the carboxylation of D-ribulose 1,5-bisphosphate, the primary event in carbon dioxide fixation, as well as the oxidative fragmentation of the pentose substrate. Both reactions occur simultaneously and in competition at the same active site. Although the small subunit is not catalytic it is essential for maximal activity. This chain is Ribulose bisphosphate carboxylase small subunit, found in Bradyrhizobium diazoefficiens (strain JCM 10833 / BCRC 13528 / IAM 13628 / NBRC 14792 / USDA 110).